The primary structure comprises 422 residues: Tryptophan synthase beta chain 2 (422 aa).

Lysine 111 is subject to N6-(pyridoxal phosphate)lysine.

The protein belongs to the TrpB family. As to quaternary structure, tetramer of two alpha and two beta chains. Pyridoxal 5'-phosphate is required as a cofactor.

It carries out the reaction (1S,2R)-1-C-(indol-3-yl)glycerol 3-phosphate + L-serine = D-glyceraldehyde 3-phosphate + L-tryptophan + H2O. Its pathway is amino-acid biosynthesis; L-tryptophan biosynthesis; L-tryptophan from chorismate: step 5/5. The beta subunit is responsible for the synthesis of L-tryptophan from indole and L-serine. This chain is Tryptophan synthase beta chain 2 (trpB2), found in Thermotoga maritima (strain ATCC 43589 / DSM 3109 / JCM 10099 / NBRC 100826 / MSB8).